The following is a 288-amino-acid chain: Cyclin-dependent kinase 2 homolog (288 aa).

A Protein kinase domain is found at 4 to 284; sequence YHGLEKIGEG…AKQALEHAYF (281 aa). Residues 10-18 and K32 contribute to the ATP site; that span reads IGEGTYGVV. Position 14 is a phosphothreonine (T14). Y15 bears the Phosphotyrosine mark. Catalysis depends on D125, which acts as the Proton acceptor. At T158 the chain carries Phosphothreonine.

Belongs to the protein kinase superfamily. CMGC Ser/Thr protein kinase family. CDC2/CDKX subfamily. As to quaternary structure, may form a complex composed of at least the catalytic subunit CRK2 and a cyclin. It depends on Mg(2+) as a cofactor. In terms of processing, autophosphorylates in presence of cyclin cyc-1 but not in presence of cyclin cyc-3.

Its subcellular location is the cytoplasm. The enzyme catalyses L-seryl-[protein] + ATP = O-phospho-L-seryl-[protein] + ADP + H(+). It catalyses the reaction L-threonyl-[protein] + ATP = O-phospho-L-threonyl-[protein] + ADP + H(+). The catalysed reaction is [DNA-directed RNA polymerase] + ATP = phospho-[DNA-directed RNA polymerase] + ADP + H(+). With respect to regulation, phosphorylation at Thr-14 or Tyr-15 inactivates the enzyme, while phosphorylation at Thr-158 activates it. Activated by cyclin cyc-1 in vitro. Activated by cyclin cyc-3 in vitro. Functionally, serine/threonine-protein kinase. Involved in the control of the cell cycle. Required for entry into S-phase and mitosis. Probable component of the kinase complex that phosphorylates the repetitive C-terminus of RNA polymerase II. In schizonts, phosphorylates ORC1 resulting in its dissociation from DNA, relocalization to the cytoplasm and likely its degradation. In Plasmodium falciparum (isolate 3D7), this protein is Cyclin-dependent kinase 2 homolog.